Here is a 214-residue protein sequence, read N- to C-terminus: MSAVTQHHADELARGADELGVALDADKQRQLLAYLALLIKWNKAYNLTAVRDPDEMVSRHLLDSLSIVPYAEAGDNWLDVGSGGGMPGVPLAILFPEKRLTLLDSNGKKTRFLTQVKLELKLANLEVVHSRVEAFRPESPFDGIVSRAFSSLEDFANWTRHLGGQETRWLAMKGVHPNEELAALPEDFRVEAEHALAVPGCQGQRHLLILRRTA.

Residues G81, M86, 132–133 (VE), and R147 contribute to the S-adenosyl-L-methionine site.

The protein belongs to the methyltransferase superfamily. RNA methyltransferase RsmG family.

It is found in the cytoplasm. It carries out the reaction guanosine(527) in 16S rRNA + S-adenosyl-L-methionine = N(7)-methylguanosine(527) in 16S rRNA + S-adenosyl-L-homocysteine. Functionally, specifically methylates the N7 position of guanine in position 527 of 16S rRNA. In Pseudomonas aeruginosa (strain LESB58), this protein is Ribosomal RNA small subunit methyltransferase G.